We begin with the raw amino-acid sequence, 93 residues long: MDGIRYAVFTDKSIRLLGKNQYTSNVESGSTRTEIKHWVELFFGVKVIAMNSHRLRGKARRMGPIMGQTMHYRRMIITLQPGYSIPPLRKKRT.

Belongs to the universal ribosomal protein uL23 family. In terms of assembly, part of the 50S ribosomal subunit.

The protein resides in the plastid. It is found in the chloroplast. Its function is as follows. Binds to 23S rRNA. This Helianthus annuus (Common sunflower) protein is Large ribosomal subunit protein uL23cz/uL23cy (rpl23-A).